The primary structure comprises 290 residues: Endo-1,4-beta-xylanase B (290 aa).

A signal peptide spans 1–19 (MVSFNSLLVAVSAATCALA). An N-linked (GlcNAc...) asparagine glycan is attached at asparagine 26. Positions 34-222 (QSTPAGTGTN…SSGSSTVTVN (189 aa)) constitute a GH11 domain. The active-site Nucleophile is glutamate 118. The Proton donor role is filled by glutamate 209. Residues 223 to 248 (PAGGVTSPIAPTGPSSVSTTPSGPSS) form a disordered region. Positions 234-248 (TGPSSVSTTPSGPSS) are enriched in low complexity. The region spanning 255–290 (TCSALYGQCGGQGWTGPTCCSSGTCKFSNNWYSQCL) is the CBM1 domain.

It belongs to the glycosyl hydrolase 11 (cellulase G) family.

It localises to the secreted. The enzyme catalyses Endohydrolysis of (1-&gt;4)-beta-D-xylosidic linkages in xylans.. It participates in glycan degradation; xylan degradation. Endo-1,4-beta-xylanase involved in the hydrolysis of xylan, a major structural heterogeneous polysaccharide found in plant biomass representing the second most abundant polysaccharide in the biosphere, after cellulose. The protein is Endo-1,4-beta-xylanase B (xynB) of Phanerodontia chrysosporium (White-rot fungus).